We begin with the raw amino-acid sequence, 490 residues long: Probable cytosol aminopeptidase (490 aa).

Mn(2+) is bound by residues Lys262 and Asp267. Lys274 is a catalytic residue. Positions 285, 344, and 346 each coordinate Mn(2+). Residue Arg348 is part of the active site.

Belongs to the peptidase M17 family. Mn(2+) is required as a cofactor.

The protein resides in the cytoplasm. It carries out the reaction Release of an N-terminal amino acid, Xaa-|-Yaa-, in which Xaa is preferably Leu, but may be other amino acids including Pro although not Arg or Lys, and Yaa may be Pro. Amino acid amides and methyl esters are also readily hydrolyzed, but rates on arylamides are exceedingly low.. It catalyses the reaction Release of an N-terminal amino acid, preferentially leucine, but not glutamic or aspartic acids.. In terms of biological role, presumably involved in the processing and regular turnover of intracellular proteins. Catalyzes the removal of unsubstituted N-terminal amino acids from various peptides. This Xanthomonas oryzae pv. oryzae (strain MAFF 311018) protein is Probable cytosol aminopeptidase.